We begin with the raw amino-acid sequence, 620 residues long: Glutathione-regulated potassium-efflux system protein KefC (620 aa).

12 helical membrane passes run 4 to 24, 26 to 46, 54 to 74, 90 to 110, 114 to 134, 149 to 169, 178 to 198, 218 to 238, 270 to 290, 294 to 314, 327 to 347, and 359 to 379; these read HTLI…PIAV, LGLG…PWGL, SILH…GLEL, GALQ…LLGL, VAEL…MQAM, FAVL…IPLL, MGAF…VVLL, VFSA…EEVG, GLLL…GTLL, LRIV…LWLI, WFAV…GAAQ, and SLTL…VILN. Residues 399–518 enclose the RCK N-terminal domain; the sequence is QPRVIIAGFG…AGVEKPERET (120 aa). A disordered region spans residues 597-620; that stretch reads GWQGTEEGKHTGNMADEPETKPSS.

This sequence belongs to the monovalent cation:proton antiporter 2 (CPA2) transporter (TC 2.A.37) family. KefC subfamily. Homodimer. Interacts with the regulatory subunit KefF.

It localises to the cell inner membrane. Pore-forming subunit of a potassium efflux system that confers protection against electrophiles. Catalyzes K(+)/H(+) antiport. The chain is Glutathione-regulated potassium-efflux system protein KefC from Escherichia coli O8 (strain IAI1).